Here is an 838-residue protein sequence, read N- to C-terminus: Outer membrane usher protein YraJ (838 aa).

The first 40 residues, 1 to 40, serve as a signal peptide directing secretion; that stretch reads MPQRHHQGHKRTPKQLALIIKRCLPMVLTGSGMLCTTANA. Cys-815 and Cys-837 form a disulfide bridge.

It belongs to the fimbrial export usher family.

The protein localises to the cell outer membrane. Functionally, part of the yraHIJK fimbrial operon. Could contribute to adhesion to various surfaces in specific environmental niches. Increases adhesion to eukaryotic T24 bladder epithelial cells in the absence of fim operon. Probably involved in the export and assembly of fimbrial subunits across the outer membrane. The polypeptide is Outer membrane usher protein YraJ (yraJ) (Escherichia coli (strain K12)).